A 187-amino-acid polypeptide reads, in one-letter code: Ubiquinone biosynthesis protein COQ4 homolog, mitochondrial (187 aa).

Positions 77, 78, 81, and 93 each coordinate Zn(2+).

It belongs to the COQ4 family. As to quaternary structure, component of a multi-subunit COQ enzyme complex. It depends on Zn(2+) as a cofactor.

Its subcellular location is the mitochondrion inner membrane. It carries out the reaction a 4-hydroxy-3-methoxy-5-(all-trans-polyprenyl)benzoate + H(+) = a 2-methoxy-6-(all-trans-polyprenyl)phenol + CO2. Its pathway is cofactor biosynthesis; ubiquinone biosynthesis. Functionally, lyase that catalyzes the C1-decarboxylation of 4-hydroxy-3-methoxy-5-(all-trans-polyprenyl)benzoic acid into 2-methoxy-6-(all-trans-polyprenyl)phenol during ubiquinone biosynthesis. This is Ubiquinone biosynthesis protein COQ4 homolog, mitochondrial from Leishmania infantum.